Consider the following 187-residue polypeptide: Elongation factor P (187 aa).

It belongs to the elongation factor P family.

The protein resides in the cytoplasm. The protein operates within protein biosynthesis; polypeptide chain elongation. In terms of biological role, involved in peptide bond synthesis. Stimulates efficient translation and peptide-bond synthesis on native or reconstituted 70S ribosomes in vitro. Probably functions indirectly by altering the affinity of the ribosome for aminoacyl-tRNA, thus increasing their reactivity as acceptors for peptidyl transferase. The sequence is that of Elongation factor P from Synechococcus sp. (strain WH7803).